Consider the following 123-residue polypeptide: Thioredoxin domain-containing protein 17 (123 aa).

N-acetylalanine is present on Ala-2. The Thioredoxin domain maps to 41 to 123 (SWCPDCVEAE…SLVEMIFSED (83 aa)). Residues Cys-43 and Cys-46 each act as nucleophile in the active site. Residues Cys-43 and Cys-46 are joined by a disulfide bond.

It belongs to the thioredoxin family. In terms of assembly, interacts with TRXR1 and DYNLL1/DNCL1. Post-translationally, the oxidized protein is reduced by TRXR1.

The protein localises to the cytoplasm. Functionally, disulfide reductase. May participate in various redox reactions through the reversible oxidation of its active center dithiol to a disulfide and catalyze dithiol-disulfide exchange reactions. Modulates TNF-alpha signaling and NF-kappa-B activation. Has peroxidase activity and may contribute to the elimination of cellular hydrogen peroxide. The protein is Thioredoxin domain-containing protein 17 (Txndc17) of Mus musculus (Mouse).